A 522-amino-acid polypeptide reads, in one-letter code: ATP synthase subunit alpha 2 (522 aa).

Residue G176–T183 participates in ATP binding.

This sequence belongs to the ATPase alpha/beta chains family. F-type ATPases have 2 components, CF(1) - the catalytic core - and CF(0) - the membrane proton channel. CF(1) has five subunits: alpha(3), beta(3), gamma(1), delta(1), epsilon(1). CF(0) has three main subunits: a(1), b(2) and c(9-12). The alpha and beta chains form an alternating ring which encloses part of the gamma chain. CF(1) is attached to CF(0) by a central stalk formed by the gamma and epsilon chains, while a peripheral stalk is formed by the delta and b chains.

It is found in the cell inner membrane. It carries out the reaction ATP + H2O + 4 H(+)(in) = ADP + phosphate + 5 H(+)(out). Its function is as follows. Produces ATP from ADP in the presence of a proton gradient across the membrane. The alpha chain is a regulatory subunit. This is ATP synthase subunit alpha 2 from Syntrophotalea carbinolica (strain DSM 2380 / NBRC 103641 / GraBd1) (Pelobacter carbinolicus).